Here is a 554-residue protein sequence, read N- to C-terminus: Guanine nucleotide-binding protein alpha-2 subunit (554 aa).

Disordered stretches follow at residues 1 to 139 and 157 to 183; these read MGLC…NNSN and VNGNSTNSDKALSNQFDQSNNSETHSG. Gly-2 is lipidated: N-myristoyl glycine. Cys-4 is lipidated: S-palmitoyl cysteine. Basic and acidic residues-rich tracts occupy residues 7 to 17 and 28 to 43; these read KDSRESTHDGG and ANRRNDVRKGAGDKKQ. Low complexity predominate over residues 52 to 66; the sequence is GSIVNAASNINNSSS. A compositionally biased stretch (polar residues) spans 67 to 85; sequence GKTKISTVSEDGTVSNGVG. Positions 91 to 139 are enriched in low complexity; the sequence is DNANNKNNGNNNNSNNNDNNNNNNNNIGNNINGNNNNDSENIHDSNNSN. One can recognise a G-alpha domain in the interval 228–554; sequence NALKVLLLGS…ENSLKDSGVL (327 aa). Residues 231 to 244 form a G1 motif region; the sequence is KVLLLGSGESGKST. The GTP site is built by Glu-239, Ser-240, Gly-241, Lys-242, Ser-243, Thr-244, Asp-351, Ile-376, Thr-382, Gly-405, Asn-471, Lys-472, Asp-474, and Ala-526. Ser-243 contacts Mg(2+). Positions 374 to 382 are G2 motif; the sequence is DVIRTRKKT. A Mg(2+)-binding site is contributed by Thr-382. The G3 motif stretch occupies residues 398 to 407; sequence LHFFDVGGQR. A G4 motif region spans residues 467–474; the sequence is VLFLNKID. The segment at 524-529 is G5 motif; sequence TQATDT.

It belongs to the G-alpha family. In terms of assembly, g proteins are composed of 3 units; alpha, beta and gamma. The alpha chain contains the guanine nucleotide binding site. Requires Mg(2+) as cofactor.

Its function is as follows. Guanine nucleotide-binding proteins (G proteins) are involved as modulators or transducers in various transmembrane signaling systems. This protein may be involved in the determination of the cAMP level according to nutritional conditions, most probably as a regulator of adenylyl cyclase. The polypeptide is Guanine nucleotide-binding protein alpha-2 subunit (GPA2) (Kluyveromyces lactis (strain ATCC 8585 / CBS 2359 / DSM 70799 / NBRC 1267 / NRRL Y-1140 / WM37) (Yeast)).